We begin with the raw amino-acid sequence, 261 residues long: Probable enoyl-CoA hydratase EchA17 (261 aa).

This sequence belongs to the enoyl-CoA hydratase/isomerase family.

It carries out the reaction a (3S)-3-hydroxyacyl-CoA = a (2E)-enoyl-CoA + H2O. The enzyme catalyses a 4-saturated-(3S)-3-hydroxyacyl-CoA = a (3E)-enoyl-CoA + H2O. Could possibly oxidize fatty acids using specific components. This is Probable enoyl-CoA hydratase EchA17 (echA17) from Mycobacterium bovis (strain BCG / Pasteur 1173P2).